A 346-amino-acid polypeptide reads, in one-letter code: MSLLCHNKGCGQHFDPQTNLPDSCCHHPGVPVFHDALKGWSCCRKRTVDFSEFLNIKGCTVGPHCAEKLPEAPQPEGPATSSSLLEQKPPNTIPKSAETLRRERPKSDLPPKLLPLNISQALEMALEQKELDQEPGAGLDSSLIQTGASCQNPGCDAVYQGSESDATPCTYHPGAPRFHEGMKSWSCCGIQTLDFGVFLAQPGCRVGRHDWGKKLLASCRHDWHQTDSLVVVTVYGQIPLPAFNWVEASQTELHIHIVFDGNRVFQAQVKLWGVVNVEQSSVSLMPSRVEISLVKADPGFWAQLEHPDALAEKSKSGVGLEMDEEESEDSDDDLSWTEEEEEAMGE.

4 residues coordinate Zn(2+): C5, C10, C24, and H27. A CHORD 1 domain is found at 5–64 (CHNKGCGQHFDPQTNLPDSCCHHPGVPVFHDALKGWSCCRKRTVDFSEFLNIKGCTVGPH). An SH3-binding motif is present at residues 28–31 (PGVP). Positions 42, 43, 59, and 64 each coordinate Zn(2+). An SH3-binding motif is present at residues 70-78 (PEAPQPEGP). Residues 70–113 (PEAPQPEGPATSSSLLEQKPPNTIPKSAETLRRERPKSDLPPKL) form a disordered region. The segment covering 79 to 94 (ATSSSLLEQKPPNTIP) has biased composition (polar residues). Residues 98–109 (ETLRRERPKSDL) are compositionally biased toward basic and acidic residues. Positions 150 and 155 each coordinate Zn(2+). The CHORD 2 domain occupies 150-209 (CQNPGCDAVYQGSESDATPCTYHPGAPRFHEGMKSWSCCGIQTLDFGVFLAQPGCRVGRH). The SH2-binding signature appears at 159 to 162 (YQGS). Zn(2+) contacts are provided by C169 and H172. The short motif at 173-176 (PGAP) is the SH3-binding element. Zn(2+) is bound by residues C187, C188, C204, and H209. Positions 216–305 (LASCRHDWHQ…ADPGFWAQLE (90 aa)) constitute a CS domain. Residues 235 to 238 (YGQI) carry the SH2-binding motif. A disordered region spans residues 311–346 (AEKSKSGVGLEMDEEESEDSDDDLSWTEEEEEAMGE). A compositionally biased stretch (acidic residues) spans 321–346 (EMDEEESEDSDDDLSWTEEEEEAMGE).

As to quaternary structure, interacts with beta-1 integrin subunit. This interaction is regulated by divalent cations, and it occurs only in absence of calcium.

May play a role during maturation and/or organization of muscles cells. The sequence is that of Integrin beta-1-binding protein 2 (ITGB1BP2) from Sus scrofa (Pig).